A 239-amino-acid chain; its full sequence is Ribonuclease Le2 (239 aa).

5 disulfide bridges follow: Cys-5–Cys-22, Cys-13–Cys-58, Cys-21–Cys-126, Cys-66–Cys-118, and Cys-191–Cys-225. Residues His-51, Glu-111, and His-115 contribute to the active site.

This sequence belongs to the RNase T2 family.

It catalyses the reaction a ribonucleotidyl-ribonucleotide-RNA + H2O = a 3'-end 3'-phospho-ribonucleotide-RNA + a 5'-end dephospho-ribonucleoside-RNA + H(+). In terms of biological role, this is a base non-specific and adenylic acid preferential ribonuclease. The protein is Ribonuclease Le2 of Lentinula edodes (Shiitake mushroom).